A 1179-amino-acid chain; its full sequence is ATP-dependent helicase/deoxyribonuclease subunit B (1179 aa).

The protein belongs to the helicase family. AddB/RexB type 2 subfamily. In terms of assembly, heterodimer of AddA and RexB. It depends on Mg(2+) as a cofactor.

In terms of biological role, the heterodimer acts as both an ATP-dependent DNA helicase and an ATP-dependent, dual-direction single-stranded exonuclease. Recognizes the chi site generating a DNA molecule suitable for the initiation of homologous recombination. This subunit has 5' -&gt; 3' nuclease activity but not helicase activity. This chain is ATP-dependent helicase/deoxyribonuclease subunit B, found in Lacticaseibacillus casei (strain BL23) (Lactobacillus casei).